The primary structure comprises 505 residues: SusD-like protein P2 (505 aa).

Positions 1–17 are cleaved as a signal peptide; that stretch reads MKKYKITFIVLLLTLVG. A lipid anchor (N-palmitoyl cysteine) is attached at cysteine 18. The S-diacylglycerol cysteine moiety is linked to residue cysteine 18.

The protein belongs to the SusD family.

It is found in the cell outer membrane. Functionally, polysaccharide-binding protein probably involved in ulvan degradation. Ulvan is the main polysaccharide component of the Ulvales (green seaweed) cell wall. It is composed of disaccharide building blocks comprising 3-sulfated rhamnose (Rha3S) linked to D-glucuronic acid (GlcA), L-iduronic acid (IduA), or D-xylose (Xyl). The SusD-like protein may mediate ulvan oligomer-binding before transport in the periplasm for further degradation. This is SusD-like protein P2 from Formosa agariphila (strain DSM 15362 / KCTC 12365 / LMG 23005 / KMM 3901 / M-2Alg 35-1).